An 89-amino-acid polypeptide reads, in one-letter code: Small ribosomal subunit protein uS15 (89 aa).

It belongs to the universal ribosomal protein uS15 family. As to quaternary structure, part of the 30S ribosomal subunit. Forms a bridge to the 50S subunit in the 70S ribosome, contacting the 23S rRNA.

One of the primary rRNA binding proteins, it binds directly to 16S rRNA where it helps nucleate assembly of the platform of the 30S subunit by binding and bridging several RNA helices of the 16S rRNA. Functionally, forms an intersubunit bridge (bridge B4) with the 23S rRNA of the 50S subunit in the ribosome. This is Small ribosomal subunit protein uS15 from Nitrosococcus oceani (strain ATCC 19707 / BCRC 17464 / JCM 30415 / NCIMB 11848 / C-107).